A 134-amino-acid chain; its full sequence is Small ribosomal subunit protein uS9 (134 aa).

Residues 109–134 are disordered; sequence DARRTEPHKPSKSSKGPRAKRQKSYR. Positions 118 to 134 are enriched in basic residues; sequence PSKSSKGPRAKRQKSYR.

The protein belongs to the universal ribosomal protein uS9 family.

The chain is Small ribosomal subunit protein uS9 from Methanococcus maripaludis (strain C7 / ATCC BAA-1331).